The following is a 136-amino-acid chain: Alpha-2-purothionin (136 aa).

A signal peptide spans 1 to 27 (MGSKGLKGVMVCLLILGLVLEQVQVEG). 4 disulfides stabilise this stretch: Cys30–Cys66, Cys31–Cys58, Cys39–Cys56, and Cys43–Cys52. A propeptide spans 73-136 (LALESNSDEP…GDAGLTSLDA (64 aa)) (acidic domain).

It belongs to the plant thionin (TC 1.C.44) family. 4 C-C subfamily.

It is found in the secreted. Functionally, thionins are small plant proteins which are toxic to animal cells. They seem to exert their toxic effect at the level of the cell membrane. Their precise function is not known. In Triticum aestivum (Wheat), this protein is Alpha-2-purothionin (THI1.2).